The chain runs to 351 residues: Holliday junction branch migration complex subunit RuvB (351 aa).

Positions 1 to 22 are disordered; sequence MSDPKANRMVSPERRSDDVGDT. A large ATPase domain (RuvB-L) region spans residues 2 to 185; the sequence is SDPKANRMVS…FGIPVRLNFY (184 aa). ATP is bound by residues leucine 24, arginine 25, glycine 66, lysine 69, threonine 70, threonine 71, 132 to 134, arginine 175, tyrosine 185, and arginine 222; that span reads EDF. Threonine 70 lines the Mg(2+) pocket. The segment at 186-256 is small ATPAse domain (RuvB-S); the sequence is TIEELESIVS…IADHALSALE (71 aa). Residues 259–351 form a head domain (RuvB-H) region; that stretch reads AAGLDAMDRR…GLFGTDESDD (93 aa). 3 residues coordinate DNA: arginine 295, arginine 314, and arginine 319.

Belongs to the RuvB family. In terms of assembly, homohexamer. Forms an RuvA(8)-RuvB(12)-Holliday junction (HJ) complex. HJ DNA is sandwiched between 2 RuvA tetramers; dsDNA enters through RuvA and exits via RuvB. An RuvB hexamer assembles on each DNA strand where it exits the tetramer. Each RuvB hexamer is contacted by two RuvA subunits (via domain III) on 2 adjacent RuvB subunits; this complex drives branch migration. In the full resolvosome a probable DNA-RuvA(4)-RuvB(12)-RuvC(2) complex forms which resolves the HJ.

The protein localises to the cytoplasm. It carries out the reaction ATP + H2O = ADP + phosphate + H(+). Its function is as follows. The RuvA-RuvB-RuvC complex processes Holliday junction (HJ) DNA during genetic recombination and DNA repair, while the RuvA-RuvB complex plays an important role in the rescue of blocked DNA replication forks via replication fork reversal (RFR). RuvA specifically binds to HJ cruciform DNA, conferring on it an open structure. The RuvB hexamer acts as an ATP-dependent pump, pulling dsDNA into and through the RuvAB complex. RuvB forms 2 homohexamers on either side of HJ DNA bound by 1 or 2 RuvA tetramers; 4 subunits per hexamer contact DNA at a time. Coordinated motions by a converter formed by DNA-disengaged RuvB subunits stimulates ATP hydrolysis and nucleotide exchange. Immobilization of the converter enables RuvB to convert the ATP-contained energy into a lever motion, pulling 2 nucleotides of DNA out of the RuvA tetramer per ATP hydrolyzed, thus driving DNA branch migration. The RuvB motors rotate together with the DNA substrate, which together with the progressing nucleotide cycle form the mechanistic basis for DNA recombination by continuous HJ branch migration. Branch migration allows RuvC to scan DNA until it finds its consensus sequence, where it cleaves and resolves cruciform DNA. The chain is Holliday junction branch migration complex subunit RuvB from Bradyrhizobium diazoefficiens (strain JCM 10833 / BCRC 13528 / IAM 13628 / NBRC 14792 / USDA 110).